A 654-amino-acid chain; its full sequence is Import motor subunit, mitochondrial (654 aa).

Residues 1-23 (MLAAKNILNRSSLSSSFRIATRL) constitute a mitochondrion transit peptide. T330 carries the post-translational modification Phosphothreonine. Residues 629 to 654 (EQLYKNDSNNNNNNNGNNAESGETKQ) form a disordered region. Residues 637-646 (NNNNNNNGNN) show a composition bias toward low complexity.

This sequence belongs to the heat shock protein 70 family. As to quaternary structure, component of the PAM complex, at least composed of SSC1 (mtHsp70), MGE1, TIM44, PAM16/TIM16, PAM17 and PAM18/TIM14. In the complex, SSC1 interacts directly with PAM18 and TIM44. Interacts with NAP1.

The protein resides in the mitochondrion matrix. The enzyme catalyses ATP + H2O = ADP + phosphate + H(+). Its function is as follows. Essential component of the PAM complex, a complex required for the translocation of transit peptide-containing proteins from the inner membrane into the mitochondrial matrix in an ATP-dependent manner. Constitutes the ATP-driven core of the motor and binds the precursor preprotein. Required for the import of the processed frataxin homolog YFH1 into the mitochondrion. The sequence is that of Import motor subunit, mitochondrial from Saccharomyces cerevisiae (strain ATCC 204508 / S288c) (Baker's yeast).